Here is a 311-residue protein sequence, read N- to C-terminus: Aspartate carbamoyltransferase catalytic subunit (311 aa).

Carbamoyl phosphate contacts are provided by arginine 55 and threonine 56. Lysine 85 is a binding site for L-aspartate. Positions 106, 135, and 138 each coordinate carbamoyl phosphate. The L-aspartate site is built by arginine 168 and arginine 230. Leucine 268 and proline 269 together coordinate carbamoyl phosphate.

It belongs to the aspartate/ornithine carbamoyltransferase superfamily. ATCase family. In terms of assembly, heterododecamer (2C3:3R2) of six catalytic PyrB chains organized as two trimers (C3), and six regulatory PyrI chains organized as three dimers (R2).

The catalysed reaction is carbamoyl phosphate + L-aspartate = N-carbamoyl-L-aspartate + phosphate + H(+). It participates in pyrimidine metabolism; UMP biosynthesis via de novo pathway; (S)-dihydroorotate from bicarbonate: step 2/3. In terms of biological role, catalyzes the condensation of carbamoyl phosphate and aspartate to form carbamoyl aspartate and inorganic phosphate, the committed step in the de novo pyrimidine nucleotide biosynthesis pathway. This Salmonella paratyphi C (strain RKS4594) protein is Aspartate carbamoyltransferase catalytic subunit.